The sequence spans 267 residues: Orotidine 5'-phosphate decarboxylase (267 aa).

An N-acetylserine modification is found at S2. Residues D37, 59 to 61 (KTH), and 91 to 100 (DRKFADIGNT) contribute to the substrate site. The active-site Proton donor is K93. Glycyl lysine isopeptide (Lys-Gly) (interchain with G-Cter in ubiquitin) cross-links involve residues K93 and K209. Substrate is bound by residues Y217 and R235. A Glycyl lysine isopeptide (Lys-Gly) (interchain with G-Cter in ubiquitin) cross-link involves residue K253.

This sequence belongs to the OMP decarboxylase family.

The enzyme catalyses orotidine 5'-phosphate + H(+) = UMP + CO2. It participates in pyrimidine metabolism; UMP biosynthesis via de novo pathway; UMP from orotate: step 2/2. This Saccharomyces cerevisiae (strain ATCC 204508 / S288c) (Baker's yeast) protein is Orotidine 5'-phosphate decarboxylase (URA3).